Here is a 190-residue protein sequence, read N- to C-terminus: E3 ubiquitin-protein ligase RNF183 (190 aa).

The Cytoplasmic portion of the chain corresponds to 1-159 (MSEPQGQELR…RECVRNPHFR (159 aa)). An RING-type zinc finger spans residues 13–60 (CPVCWNPFNNTFHTPKVLDCCHSFCVECLAHLSLVTPARRRLLCPLCR). The chain crosses the membrane as a helical; Anchor for type IV membrane protein span at residues 160–180 (IFAYLMAVILSVTLLLIFSIF). The Lumenal portion of the chain corresponds to 181–190 (WTKQFFWGMG).

Interacts with FATE1. Interacts with SEC16A. Interacts with BCL2L1. Post-translationally, autoubiquitinated (in vitro). As to expression, highly expressed in the kidney and testis.

It is found in the endoplasmic reticulum membrane. It localises to the endoplasmic reticulum. The protein resides in the golgi apparatus. Its subcellular location is the cis-Golgi network membrane. The protein localises to the lysosome membrane. It catalyses the reaction S-ubiquitinyl-[E2 ubiquitin-conjugating enzyme]-L-cysteine + [acceptor protein]-L-lysine = [E2 ubiquitin-conjugating enzyme]-L-cysteine + N(6)-ubiquitinyl-[acceptor protein]-L-lysine.. Its pathway is protein modification; protein ubiquitination. Functionally, acts as an E3 ubiquitin ligase catalyzing the covalent attachment of ubiquitin moieties onto substrate proteins. Triggers apoptosis in response to prolonged ER stress by mediating the polyubiquitination and subsequent proteasomal degradation of BCL2L1. May collaborate with FATE1 to restrain BIK protein levels thus regulating apoptotic signaling. The polypeptide is E3 ubiquitin-protein ligase RNF183 (Rnf183) (Mus musculus (Mouse)).